A 793-amino-acid chain; its full sequence is Flavin carrier protein 1 (793 aa).

The N-terminal stretch at 1–21 (MQVLVTLWCLICTCLVLPVAA) is a signal peptide. Topologically, residues 22–163 (KKRTLTASSL…FFSNGKTVSQ (142 aa)) are lumenal. Asn143 is a glycosylation site (N-linked (GlcNAc...) asparagine). The helical transmembrane segment at 164 to 184 (IGVKWVTAVIAGIGLLTSAVL) threads the bilayer. Residues 185–194 (STFGNSTAAS) lie on the Cytoplasmic side of the membrane. Residues 195–215 (HISANTMSLFLYFQSVAVVAM) form a helical membrane-spanning segment. Over 216 to 223 (QHVDSVPP) the chain is Lumenal. The helical transmembrane segment at 224–244 (IAAAWSENLAWSMGLIRITFM) threads the bilayer. Topologically, residues 245 to 249 (QKIFR) are cytoplasmic. The helical transmembrane segment at 250 to 272 (WYVEATGGSASLYLTATTMSVLT) threads the bilayer. The Lumenal portion of the chain corresponds to 273–317 (QRGLDYLKNTSVYKRAENVLYGNSNTLIFRGIKRMGYRMKIENTA). Asn281 is a glycosylation site (N-linked (GlcNAc...) asparagine). A helical transmembrane segment spans residues 318–338 (IVCTGFTFFVLCGYFLAGFIM). Residues 339 to 372 (ACKYSIELCIRCGWMRSDRFYQFRKNWRSVLKGS) lie on the Cytoplasmic side of the membrane. A helical transmembrane segment spans residues 373–393 (LLRYIYIGFTQLTILSFWEFT). The Lumenal segment spans residues 394 to 397 (ERDS). The helical transmembrane segment at 398–418 (AGVIVIACLFIVLSCGLMAWA) threads the bilayer. Topologically, residues 419–461 (AYRTIFFASKSVEMYNNPAALLYGDEYVLNKYGFFYTMFNAKH) are cytoplasmic. Residues 462 to 482 (YWWNALLTTYILVKALFVGFA) form a helical membrane-spanning segment. The Lumenal segment spans residues 483 to 484 (QA). Residues 485 to 505 (SGKTQALAIFIIDLAYFVAII) traverse the membrane as a helical segment. Over 506 to 516 (RYKPYLDRPTN) the chain is Cytoplasmic. The chain crosses the membrane as a helical span at residues 517–537 (IVNIFICTVTLVNSFLFMFFS). The Lumenal portion of the chain corresponds to 538–551 (NLFNQKYAVSAIMG). Residues 552–572 (WVFFIMNAAFSLLLLLMILAF) form a helical membrane-spanning segment. Topologically, residues 573–793 (TTIILFSKNP…KANILDPDYL (221 aa)) are cytoplasmic. Residue Ser610 is modified to Phosphoserine. Thr626 is subject to Phosphothreonine. 2 disordered regions span residues 649–674 (YDDE…PTFS) and 689–731 (KLGS…QESE). A compositionally biased stretch (polar residues) spans 701 to 719 (ITQQEVSPDRASSSPNSKS). 2 positions are modified to phosphoserine: Ser771 and Ser774.

The protein belongs to the transient receptor potential (TRP) ion channel family.

It localises to the endoplasmic reticulum membrane. Its function is as follows. May be responsible for the transport of FAD into the endoplasmic reticulum lumen, where it is required for oxidative protein folding. This is Flavin carrier protein 1 (FLC1) from Saccharomyces cerevisiae (strain ATCC 204508 / S288c) (Baker's yeast).